The chain runs to 308 residues: Cytochrome b (308 aa).

4 helical membrane-spanning segments follow: residues 1–21 (FGSLLGICLMTQIITGLLLAM), 45–66 (WLIRNLHANGASFFFICIYLHI), 81–101 (WNIGVILLLTLMATAFVGYVL), and 146–166 (FFALHFLLHFIIAGLTFIHLT). The heme b site is built by His-51 and His-65. Positions 150 and 164 each coordinate heme b. Position 169 (His-169) interacts with a ubiquinone. A run of 3 helical transmembrane segments spans residues 194–214 (TKDALGFILLLFPLMTLAMFS), 256–276 (LGGVLALAASVLILLLIPLLH), and 288–308 (LSQFLFWTLVMNLLILTWIGS).

This sequence belongs to the cytochrome b family. The cytochrome bc1 complex contains 11 subunits: 3 respiratory subunits (MT-CYB, CYC1 and UQCRFS1), 2 core proteins (UQCRC1 and UQCRC2) and 6 low-molecular weight proteins (UQCRH/QCR6, UQCRB/QCR7, UQCRQ/QCR8, UQCR10/QCR9, UQCR11/QCR10 and a cleavage product of UQCRFS1). This cytochrome bc1 complex then forms a dimer. It depends on heme b as a cofactor.

The protein resides in the mitochondrion inner membrane. Functionally, component of the ubiquinol-cytochrome c reductase complex (complex III or cytochrome b-c1 complex) that is part of the mitochondrial respiratory chain. The b-c1 complex mediates electron transfer from ubiquinol to cytochrome c. Contributes to the generation of a proton gradient across the mitochondrial membrane that is then used for ATP synthesis. In Zaratornis stresemanni (White-cheeked cotinga), this protein is Cytochrome b (MT-CYB).